A 61-amino-acid chain; its full sequence is Large ribosomal subunit protein uL30 (61 aa).

Belongs to the universal ribosomal protein uL30 family. In terms of assembly, part of the 50S ribosomal subunit.

The sequence is that of Large ribosomal subunit protein uL30 from Frankia alni (strain DSM 45986 / CECT 9034 / ACN14a).